A 383-amino-acid chain; its full sequence is tRNA-specific 2-thiouridylase MnmA (383 aa).

Residues 6–13 and Leu32 each bind ATP; that span reads AMSGGVDS. The Nucleophile role is filled by Cys101. A disulfide bond links Cys101 and Cys199. Residue Gly125 participates in ATP binding. The interval 148–150 is interaction with tRNA; that stretch reads KDQ. Cys199 (cysteine persulfide intermediate) is an active-site residue.

It belongs to the MnmA/TRMU family.

Its subcellular location is the cytoplasm. The enzyme catalyses S-sulfanyl-L-cysteinyl-[protein] + uridine(34) in tRNA + AH2 + ATP = 2-thiouridine(34) in tRNA + L-cysteinyl-[protein] + A + AMP + diphosphate + H(+). Catalyzes the 2-thiolation of uridine at the wobble position (U34) of tRNA, leading to the formation of s(2)U34. The polypeptide is tRNA-specific 2-thiouridylase MnmA (Kocuria rhizophila (strain ATCC 9341 / DSM 348 / NBRC 103217 / DC2201)).